Here is a 416-residue protein sequence, read N- to C-terminus: NADH-quinone oxidoreductase subunit D (416 aa).

It belongs to the complex I 49 kDa subunit family. NDH-1 is composed of 14 different subunits. Subunits NuoB, C, D, E, F, and G constitute the peripheral sector of the complex.

The protein localises to the cell inner membrane. The enzyme catalyses a quinone + NADH + 5 H(+)(in) = a quinol + NAD(+) + 4 H(+)(out). NDH-1 shuttles electrons from NADH, via FMN and iron-sulfur (Fe-S) centers, to quinones in the respiratory chain. The immediate electron acceptor for the enzyme in this species is believed to be ubiquinone. Couples the redox reaction to proton translocation (for every two electrons transferred, four hydrogen ions are translocated across the cytoplasmic membrane), and thus conserves the redox energy in a proton gradient. This chain is NADH-quinone oxidoreductase subunit D, found in Caulobacter sp. (strain K31).